We begin with the raw amino-acid sequence, 656 residues long: MSSFQSATTRQGLHRRNMNSETPQSEFIQRLRRSPPSESSSSTPSSSTTTSSTTTTSNTSGKKKKTAPSASDFYVPSLPGQPKDSQLILYAGHLSFSPPDTTIEPEKDSYGFFFLNKARHIANRPVLLVWLNGGPGCSSFDGSLMEVGPLRMVLKGDGTLKEVDAAWNEYANMLFIDQPTGTGYSYGPKPNYVHELDVSSANLVNLLARFFKIFPEYQQMDLYICGESFAGQYIPYLAQAILDTNIISAPLKGIMIGNGWIDPINQYLAYPEFAFKVGLVNPSSKAADLVNEELKKCTEWIDSNSTTPIHIEACEGILSAITDSTVQTVNSQKMCLNMYDVRLVDSYPACGLTWPPDLADITPYLSRTDVKQALHAQDHAADWVECEAKVGNNFWAKTSQPSVTLFPKLLDKIKILLFSGDQDLICCHTGTERMIDHLTWAGHQGWTSQAINQPWKVNGSYAGLWKEERNLTYVLVANASHMAPYDVPYVTQDMLVRFLGIDVMTAAGPAAQITSRIGEETATKVNRVVMNETKLGQEGSGTTGLAMTSGPVHDENYYNASSAMLFLTLVGLVVGLIFFVRRRLRRDGHGDFAHHPSDETEIILKNHHHHHLSPDSSLPRSARDRQFQPVPTDDLDDHHLHPNLPSNNTSYQDLPR.

The span at 1 to 11 (MSSFQSATTRQ) shows a compositional bias: polar residues. Residues 1-79 (MSSFQSATTR…ASDFYVPSLP (79 aa)) form a disordered region. A compositionally biased stretch (low complexity) spans 34–60 (SPPSESSSSTPSSSTTTSSTTTTSNTS). N-linked (GlcNAc...) asparagine glycosylation is present at asparagine 58. Serine 228 is a catalytic residue. Asparagine 304 carries an N-linked (GlcNAc...) asparagine glycan. The active site involves aspartate 423. 3 N-linked (GlcNAc...) asparagine glycosylation sites follow: asparagine 458, asparagine 470, and asparagine 478. Histidine 481 is a catalytic residue. N-linked (GlcNAc...) asparagine glycosylation is found at asparagine 531 and asparagine 559. Residues 560 to 580 (ASSAMLFLTLVGLVVGLIFFV) form a helical membrane-spanning segment. The Cytoplasmic segment spans residues 581–656 (RRRLRRDGHG…NNTSYQDLPR (76 aa)). A disordered region spans residues 608–656 (HHHHLSPDSSLPRSARDRQFQPVPTDDLDDHHLHPNLPSNNTSYQDLPR). A compositionally biased stretch (polar residues) spans 644 to 656 (LPSNNTSYQDLPR).

This sequence belongs to the peptidase S10 family.

The protein localises to the golgi apparatus. It localises to the trans-Golgi network membrane. It catalyses the reaction Preferential release of a C-terminal arginine or lysine residue.. Protease with a carboxypeptidase B-like function involved in the C-terminal processing of the lysine and arginine residues from protein precursors. Promotes cell fusion and is involved in the programmed cell death. The sequence is that of Pheromone-processing carboxypeptidase KEX1 (KEX1) from Puccinia graminis f. sp. tritici (strain CRL 75-36-700-3 / race SCCL) (Black stem rust fungus).